Consider the following 351-residue polypeptide: Fe(3+) ions import ATP-binding protein FbpC (351 aa).

The ABC transporter domain occupies 7-237 (VELKNVTKRF…PASEFMASFM (231 aa)). Position 39 to 46 (39 to 46 (GPSGCGKT)) interacts with ATP.

The protein belongs to the ABC transporter superfamily. Fe(3+) ion importer (TC 3.A.1.10) family. The complex is composed of two ATP-binding proteins (FbpC), two transmembrane proteins (FbpB) and a solute-binding protein (FbpA).

It localises to the cell inner membrane. It carries out the reaction Fe(3+)(out) + ATP + H2O = Fe(3+)(in) + ADP + phosphate + H(+). In terms of biological role, part of the ABC transporter complex FbpABC involved in Fe(3+) ions import. Responsible for energy coupling to the transport system. This is Fe(3+) ions import ATP-binding protein FbpC from Photorhabdus laumondii subsp. laumondii (strain DSM 15139 / CIP 105565 / TT01) (Photorhabdus luminescens subsp. laumondii).